Here is a 279-residue protein sequence, read N- to C-terminus: MRNGSVLFGLFFIGHSCSVLLAAPTRASNNFDVESTHAEQWDSNGKRTLQADDSERTLAEERSMTQALLPAAEAFGKTKLPETTVPRASLGSKLNPMTWLKRIWYKLRLWNARFRLAKLKVRTSGENSIDRATLEGLTPLYLKKLKNEIFRYSSSVPRDKVQIEDEYDTFVTKYFRHFDGLFKEKPVTKMGKWDKLVRAMTRTGQLAMRAMLRKVGRTVDKGYSNEKLISLDVSPLLYMRLLVKRGVFTDVEHNKAKIDRLKNYVKAYKEHVMVSQPGG.

Positions 1–22 (MRNGSVLFGLFFIGHSCSVLLA) are cleaved as a signal peptide. A RxLR-dEER motif is present at residues 47–62 (RTLQADDSERTLAEER).

It belongs to the RxLR effector family.

The protein localises to the secreted. It is found in the host nucleus. Its function is as follows. Secreted effector that completely suppresses the host cell death induced by cell death-inducing proteins. The polypeptide is Secreted RxLR effector protein 152 (Plasmopara viticola (Downy mildew of grapevine)).